A 414-amino-acid chain; its full sequence is Sex comb on midleg-like protein 4 (414 aa).

Ser-55 and Ser-65 each carry phosphoserine. Residues 257-276 (HRGSLHPSSSLYCKRQNSGD) are compositionally biased toward polar residues. The tract at residues 257 to 343 (HRGSLHPSSS…DARRPRSRNP (87 aa)) is disordered. Over residues 284-304 (AATAGGPRTSPMSSGGPSAPG) the composition is skewed to low complexity. The SAM domain maps to 288–354 (GGPRTSPMSS…AWTVEDVVWF (67 aa)). Over residues 312-332 (PKRNTTSLEGNRCASSPSQDA) the composition is skewed to polar residues.

It belongs to the SCM family.

Its subcellular location is the nucleus. Putative Polycomb group (PcG) protein. PcG proteins act by forming multiprotein complexes, which are required to maintain the transcriptionally repressive state of homeotic genes throughout development. The sequence is that of Sex comb on midleg-like protein 4 (SCML4) from Homo sapiens (Human).